The chain runs to 474 residues: Protein U79/U80 (474 aa).

2 stretches are compositionally biased toward basic and acidic residues: residues 156-165 and 175-219; these read DRKKHDDEHR and RKVE…KRQK. Disordered stretches follow at residues 156-219 and 412-441; these read DRKK…KRQK and SGQNRGRARGRGRGRAPRRRNSNINNSRTQ. Residues 417–432 show a composition bias toward basic residues; sequence GRARGRGRGRAPRRRN.

This sequence belongs to the herpesviridae U79/UL112 family.

It is found in the host nucleus. In terms of biological role, may be involved in DNA replication. In Homo sapiens (Human), this protein is Protein U79/U80 (U79/U80).